The following is a 174-amino-acid chain: Single-stranded DNA-binding protein 1 (174 aa).

The 106-residue stretch at 6–111 (VNKVILVGNL…VVVNVGGTMQ (106 aa)) folds into the SSB domain. A DNA-binding region spans residues 55–61 (WHRVVLF). The segment at 110–174 (MQMLGGRQGG…PMDFDDDIPF (65 aa)) is disordered. The span at 115 to 133 (GRQGGGAPAGGGQQQGGWG) shows a compositional bias: gly residues. A compositionally biased stretch (low complexity) spans 134 to 160 (QPQQPQGGNQFSGGAQSRPQQQAPAAP). The Important for interaction with partner proteins motif lies at 169–174 (DDDIPF).

As to quaternary structure, homotetramer. Binds PriA via its C-terminus.

Its function is as follows. Plays an important role in DNA replication, recombination and repair. Binds to ssDNA and to an array of partner proteins to recruit them to their sites of action during DNA metabolism. Stimulates the ATPase activity of PriA. One tetramer binds to 26 nucleotides (nt) of ssDNA, a 55 nt piece of ssDNA probably binds 2 tetramers. This chain is Single-stranded DNA-binding protein 1, found in Klebsiella pneumoniae subsp. pneumoniae (strain ATCC 700721 / MGH 78578).